Consider the following 95-residue polypeptide: Putative RelE-like toxin protein (95 aa).

This sequence belongs to the RelE toxin family.

Its function is as follows. Toxic component of a type II toxin-antitoxin (TA) system. This is Putative RelE-like toxin protein from Escherichia coli.